Here is a 421-residue protein sequence, read N- to C-terminus: Galactooligosaccharide-binding protein (421 aa).

The first 22 residues, Met1–Ala22, serve as a signal peptide directing secretion. A lipid anchor (N-palmitoyl cysteine) is attached at Cys23. Residue Cys23 is the site of S-diacylglycerol cysteine attachment. The interval Ala393 to Lys421 is disordered.

Belongs to the bacterial solute-binding protein 1 family. The complex is composed of two ATP-binding proteins (MsmX), two transmembrane proteins (GanP and GanQ) and a solute-binding protein (GanS).

Its subcellular location is the cell membrane. Involved in galactan degradation. Part of the ABC transporter complex GanPQS involved in the uptake of galactooligosaccharides. Binds mainly galactotetraose and galactotriose. The sequence is that of Galactooligosaccharide-binding protein from Bacillus subtilis (strain 168).